A 469-amino-acid polypeptide reads, in one-letter code: Zinc transporter SLC39A7 (469 aa).

A helical membrane pass occupies residues 5–25; the sequence is LGAPHWVAVGLLTWAALGLLV. 2 stretches are compositionally biased toward basic and acidic residues: residues 43 to 56 and 66 to 114; these read HGHSHRRSHEDFHH and HTHE…EHSH. A disordered region spans residues 43–122; sequence HGHSHRRSHE…SHGGYGESGA (80 aa). His66 is subject to Pros-methylhistidine. Transmembrane regions (helical) follow at residues 138-158, 169-189, and 214-234; these read ALGATVLISAAPFFVLFLIPV, LQILLSFASGGLLGDAFLHLI, and GPILSVGLWVLSGIVAFLVVE. The span at 242 to 255 shows a compositional bias: basic residues; it reads GGHGHSHGHGHTHG. The tract at residues 242 to 313 is disordered; sequence GGHGHSHGHG…QNSEEEKTGS (72 aa). The segment covering 256–266 has biased composition (low complexity); it reads HTQGSHGHGTQ. Phosphoserine is present on residues Ser275 and Ser276. The segment covering 295-313 has biased composition (basic and acidic residues); sequence RLKDGPLRPQNSEEEKTGS. A run of 3 helical transmembrane segments spans residues 386 to 406, 417 to 437, and 448 to 468; these read LTAIGALAGTACALLTEGGAV, GWVLPFTAGGFIYVATVSVLP, and SLLEVLGLLGGVVMMVLIAHL.

Belongs to the ZIP transporter (TC 2.A.5) family. KE4/Catsup subfamily. As to quaternary structure, homodimer. In terms of processing, methylation at some His residue by METTL9 leads to reduced zinc-binding. Post-translationally, rapidly phosphorylated by CK2 following Zn(2+) treatment. This phosphorylation is required for efficient cytosolic Zn(2+) release.

Its subcellular location is the endoplasmic reticulum membrane. The protein resides in the golgi apparatus. It is found in the cis-Golgi network membrane. The catalysed reaction is Zn(2+)(in) = Zn(2+)(out). In terms of biological role, transports Zn(2+) from the endoplasmic reticulum (ER)/Golgi apparatus to the cytosol, playing an essential role in the regulation of cytosolic zinc levels. Acts as a gatekeeper of zinc release from intracellular stores, requiring post-translational activation by phosphorylation, resulting in activation of multiple downstream pathways leading to cell growth and proliferation. Has an essential role in B cell development and is required for proper B cell receptor signaling. Plays an important role in maintaining intestinal epithelial homeostasis and skin dermis development by regulating ER function. Controls cell signaling pathways involved in glucose metabolism in skeletal muscle. Has a protective role against ER stress in different biological contexts. Mediates Zn(2+)-induced ferroptosis. The polypeptide is Zinc transporter SLC39A7 (Canis lupus familiaris (Dog)).